The chain runs to 147 residues: MDIQRTQSLLLLLLLTLLGLGLVQPSYGQDRMYQRFLRQHVDPEGTGGSDNYCNVMMQRRRMTSTQCKRFNTFIHEDIWNIRSICDTANIPCKNGNMNCHEGIVRVTDCRETGSSVPHNCRYRARASTRRVVIACEGTPEVPVHFDR.

The signal sequence occupies residues 1-28 (MDIQRTQSLLLLLLLTLLGLGLVQPSYG). At Gln-29 the chain carries Pyrrolidone carboxylic acid. DUMP contacts are provided by Arg-35, His-40, Lys-68, Asn-71, and Thr-72. His-40 functions as the Proton acceptor in the catalytic mechanism. 4 cysteine pairs are disulfide-bonded: Cys-53/Cys-109, Cys-67/Cys-120, Cys-85/Cys-135, and Cys-92/Cys-99. The active-site Proton donor is the His-144. Phe-145 provides a ligand contact to dUMP.

It belongs to the pancreatic ribonuclease family.

It localises to the secreted. Functionally, cleaves preferentially after uridine bases. Has antimicrobial activity against uropathogenic E.coli (UPEC). Probably contributes to urinary tract sterility. In Rattus norvegicus (Rat), this protein is Ribonuclease 4 (Rnase4).